The primary structure comprises 442 residues: DNA N(6)-methyladenine demethylase ALKBH1D (442 aa).

Residues 135-144 (SMVHFDSTNP) are compositionally biased toward polar residues. The interval 135 to 185 (SMVHFDSTNPSSSSKSSQSQNLKIRKVRNHRNSGFKSRDQSPQRIKDPPPF) is disordered. Positions 145–154 (SSSSKSSQSQ) are enriched in low complexity. The span at 157 to 167 (KIRKVRNHRNS) shows a compositional bias: basic residues. The segment covering 170 to 183 (KSRDQSPQRIKDPP) has biased composition (basic and acidic residues). The 111-residue stretch at 332–442 (SPDICIVNFY…GRLNLTFRHF (111 aa)) folds into the Fe2OG dioxygenase domain. A 2-oxoglutarate-binding site is contributed by 339-341 (NFY). Positions 350, 352, and 410 each coordinate Fe cation. 434 to 440 (RLNLTFR) contributes to the 2-oxoglutarate binding site.

Belongs to the alkB family. It depends on Fe(2+) as a cofactor. As to expression, expressed at low levels in roots, seedlings and rosette leaves, but barely in cauline leaves, stems, siliques and flowers.

Its subcellular location is the nucleus. The protein resides in the cytoplasm. It carries out the reaction an N(6)-methyl-2'-deoxyadenosine in DNA + 2-oxoglutarate + O2 = a 2'-deoxyadenosine in DNA + formaldehyde + succinate + CO2. Functionally, dioxygenase that catalyzes DNA N(6)-methyladenine (6 mA) demethylation to modulate gene expression and regulate seed germination. The protein is DNA N(6)-methyladenine demethylase ALKBH1D of Arabidopsis thaliana (Mouse-ear cress).